Reading from the N-terminus, the 260-residue chain is Thiazole synthase (260 aa).

Lys96 (schiff-base intermediate with DXP) is an active-site residue. 1-deoxy-D-xylulose 5-phosphate is bound by residues Gly157, 184–185 (AG), and 206–207 (NT).

It belongs to the ThiG family. Homotetramer. Forms heterodimers with either ThiH or ThiS.

The protein resides in the cytoplasm. It catalyses the reaction [ThiS sulfur-carrier protein]-C-terminal-Gly-aminoethanethioate + 2-iminoacetate + 1-deoxy-D-xylulose 5-phosphate = [ThiS sulfur-carrier protein]-C-terminal Gly-Gly + 2-[(2R,5Z)-2-carboxy-4-methylthiazol-5(2H)-ylidene]ethyl phosphate + 2 H2O + H(+). It participates in cofactor biosynthesis; thiamine diphosphate biosynthesis. Functionally, catalyzes the rearrangement of 1-deoxy-D-xylulose 5-phosphate (DXP) to produce the thiazole phosphate moiety of thiamine. Sulfur is provided by the thiocarboxylate moiety of the carrier protein ThiS. In vitro, sulfur can be provided by H(2)S. The sequence is that of Thiazole synthase from Rhodopseudomonas palustris (strain BisB18).